Reading from the N-terminus, the 371-residue chain is Peptide chain release factor 2 (371 aa).

Position 252 is an N5-methylglutamine (glutamine 252).

This sequence belongs to the prokaryotic/mitochondrial release factor family. Post-translationally, methylated by PrmC. Methylation increases the termination efficiency of RF2.

It localises to the cytoplasm. Its function is as follows. Peptide chain release factor 2 directs the termination of translation in response to the peptide chain termination codons UGA and UAA. This is Peptide chain release factor 2 from Staphylococcus haemolyticus (strain JCSC1435).